Consider the following 194-residue polypeptide: Protein GrpE (194 aa).

Basic and acidic residues-rich tracts occupy residues 1–19 (MSKEEFPSEKNLDKEENTS) and 26–44 (KKEAAKGEETKKNNENQKL). Residues 1-44 (MSKEEFPSEKNLDKEENTSKPKKAVKKEAAKGEETKKNNENQKL) form a disordered region.

Belongs to the GrpE family. Homodimer.

It localises to the cytoplasm. Participates actively in the response to hyperosmotic and heat shock by preventing the aggregation of stress-denatured proteins, in association with DnaK and GrpE. It is the nucleotide exchange factor for DnaK and may function as a thermosensor. Unfolded proteins bind initially to DnaJ; upon interaction with the DnaJ-bound protein, DnaK hydrolyzes its bound ATP, resulting in the formation of a stable complex. GrpE releases ADP from DnaK; ATP binding to DnaK triggers the release of the substrate protein, thus completing the reaction cycle. Several rounds of ATP-dependent interactions between DnaJ, DnaK and GrpE are required for fully efficient folding. The chain is Protein GrpE from Lactobacillus acidophilus (strain ATCC 700396 / NCK56 / N2 / NCFM).